The sequence spans 212 residues: Probable GTP-binding protein EngB (212 aa).

Residues 38–210 (SLPEIAFVGK…KASLAKCIKP (173 aa)) enclose the EngB-type G domain. Residues 46-53 (GKSNVGKS), 73-77 (GRTRQ), 91-94 (DLPG), 158-161 (TKSD), and 189-191 (VSN) contribute to the GTP site. Mg(2+)-binding residues include Ser53 and Thr75.

This sequence belongs to the TRAFAC class TrmE-Era-EngA-EngB-Septin-like GTPase superfamily. EngB GTPase family. Mg(2+) is required as a cofactor.

Necessary for normal cell division and for the maintenance of normal septation. The chain is Probable GTP-binding protein EngB from Rickettsia peacockii (strain Rustic).